A 114-amino-acid chain; its full sequence is Hydrogenase maturation factor HypA (114 aa).

Residue histidine 2 coordinates Ni(2+). Residues cysteine 73, cysteine 76, cysteine 89, and cysteine 92 each coordinate Zn(2+).

The protein belongs to the HypA/HybF family.

In terms of biological role, involved in the maturation of [NiFe] hydrogenases. Required for nickel insertion into the metal center of the hydrogenase. In Azoarcus sp. (strain BH72), this protein is Hydrogenase maturation factor HypA.